Consider the following 471-residue polypeptide: Uronate isomerase (471 aa).

This sequence belongs to the metallo-dependent hydrolases superfamily. Uronate isomerase family.

It carries out the reaction D-glucuronate = D-fructuronate. The catalysed reaction is aldehydo-D-galacturonate = keto-D-tagaturonate. The protein operates within carbohydrate metabolism; pentose and glucuronate interconversion. This Latilactobacillus sakei subsp. sakei (strain 23K) (Lactobacillus sakei subsp. sakei) protein is Uronate isomerase.